The primary structure comprises 186 residues: Acireductone dioxygenase (186 aa).

The Fe(2+) site is built by His-89, His-91, Glu-95, and His-134. Ni(2+) is bound by residues His-89, His-91, Glu-95, and His-134.

Belongs to the acireductone dioxygenase (ARD) family. It depends on Fe(2+) as a cofactor. Ni(2+) is required as a cofactor.

The protein localises to the cytoplasm. Its subcellular location is the nucleus. It carries out the reaction 1,2-dihydroxy-5-(methylsulfanyl)pent-1-en-3-one + O2 = 4-methylsulfanyl-2-oxobutanoate + formate + 2 H(+). The catalysed reaction is 1,2-dihydroxy-5-(methylsulfanyl)pent-1-en-3-one + O2 = 3-(methylsulfanyl)propanoate + CO + formate + 2 H(+). It participates in amino-acid biosynthesis; L-methionine biosynthesis via salvage pathway; L-methionine from S-methyl-5-thio-alpha-D-ribose 1-phosphate: step 5/6. Its function is as follows. Catalyzes 2 different reactions between oxygen and the acireductone 1,2-dihydroxy-3-keto-5-methylthiopentene (DHK-MTPene) depending upon the metal bound in the active site. Fe-containing acireductone dioxygenase (Fe-ARD) produces formate and 2-keto-4-methylthiobutyrate (KMTB), the alpha-ketoacid precursor of methionine in the methionine recycle pathway. Ni-containing acireductone dioxygenase (Ni-ARD) produces methylthiopropionate, carbon monoxide and formate, and does not lie on the methionine recycle pathway. This chain is Acireductone dioxygenase, found in Drosophila melanogaster (Fruit fly).